A 314-amino-acid chain; its full sequence is Polyamine aminopropyltransferase (314 aa).

The PABS domain maps to 13–249 (WSWFLEWLTP…SMWGFVVASD (237 aa)). Gln-42 contributes to the S-methyl-5'-thioadenosine binding site. Spermidine is bound by residues His-73 and Glu-97. S-methyl-5'-thioadenosine-binding positions include Asp-117 and 149-150 (DA). Asp-168 functions as the Proton acceptor in the catalytic mechanism. Residue Pro-177 coordinates S-methyl-5'-thioadenosine.

The protein belongs to the spermidine/spermine synthase family. As to quaternary structure, homodimer or homotetramer.

It is found in the cytoplasm. The enzyme catalyses S-adenosyl 3-(methylsulfanyl)propylamine + putrescine = S-methyl-5'-thioadenosine + spermidine + H(+). Its pathway is amine and polyamine biosynthesis; spermidine biosynthesis; spermidine from putrescine: step 1/1. Its function is as follows. Catalyzes the irreversible transfer of a propylamine group from the amino donor S-adenosylmethioninamine (decarboxy-AdoMet) to putrescine (1,4-diaminobutane) to yield spermidine. The sequence is that of Polyamine aminopropyltransferase from Aeropyrum pernix (strain ATCC 700893 / DSM 11879 / JCM 9820 / NBRC 100138 / K1).